Here is a 166-residue protein sequence, read N- to C-terminus: MKKVYHYIIHYVRTYLLLELLAGLWLTVKYFFRKKITVQFPEEQTPLSPRFRGLLALRRYPNGEERCIACKLCEAVCPALAITIESEQREDGSRRTTRYDIDMFKCINCGLCEESCPVDSIVVTPIHHYHISERGQNIMTKEKLLAVGDLMETQLAADRAADEKYR.

4Fe-4S ferredoxin-type domains follow at residues 57 to 87 and 97 to 126; these read LRRY…IESE and TRYD…VTPI. Residues Cys67, Cys70, Cys73, Cys77, Cys106, Cys109, Cys112, and Cys116 each contribute to the [4Fe-4S] cluster site.

Belongs to the complex I 23 kDa subunit family. In terms of assembly, NDH-1 is composed of 14 different subunits. Subunits NuoA, H, J, K, L, M, N constitute the membrane sector of the complex. [4Fe-4S] cluster is required as a cofactor.

Its subcellular location is the cell inner membrane. The enzyme catalyses a quinone + NADH + 5 H(+)(in) = a quinol + NAD(+) + 4 H(+)(out). Its function is as follows. NDH-1 shuttles electrons from NADH, via FMN and iron-sulfur (Fe-S) centers, to quinones in the respiratory chain. The immediate electron acceptor for the enzyme in this species is believed to be ubiquinone. Couples the redox reaction to proton translocation (for every two electrons transferred, four hydrogen ions are translocated across the cytoplasmic membrane), and thus conserves the redox energy in a proton gradient. In Legionella pneumophila (strain Paris), this protein is NADH-quinone oxidoreductase subunit I.